A 661-amino-acid polypeptide reads, in one-letter code: Acetyl-coenzyme A synthetase (661 aa).

CoA-binding positions include 197-200 and T320; that span reads RGGK. ATP contacts are provided by residues 396-398, 420-425, D511, and R526; these read GEP and DTWWQT. S534 is a binding site for CoA. An ATP-binding site is contributed by R537. Residues V548 and V553 each coordinate Mg(2+). At K620 the chain carries N6-acetyllysine.

The protein belongs to the ATP-dependent AMP-binding enzyme family. The cofactor is Mg(2+). Acetylated. Deacetylation by the SIR2-homolog deacetylase activates the enzyme.

It carries out the reaction acetate + ATP + CoA = acetyl-CoA + AMP + diphosphate. Catalyzes the conversion of acetate into acetyl-CoA (AcCoA), an essential intermediate at the junction of anabolic and catabolic pathways. AcsA undergoes a two-step reaction. In the first half reaction, AcsA combines acetate with ATP to form acetyl-adenylate (AcAMP) intermediate. In the second half reaction, it can then transfer the acetyl group from AcAMP to the sulfhydryl group of CoA, forming the product AcCoA. This Leptospira interrogans serogroup Icterohaemorrhagiae serovar copenhageni (strain Fiocruz L1-130) protein is Acetyl-coenzyme A synthetase.